A 93-amino-acid polypeptide reads, in one-letter code: MDSLRKMLISVAMLGAGAGVGYALLVIVTPGERRKQEMLKEMPLQDPRSREEAARTQQLLLATLQEAATTQENVAWRKNWMVGGEGGAGGRSP.

Residues 1–7 (MDSLRKM) lie on the Mitochondrial matrix side of the membrane. A helical transmembrane segment spans residues 8–28 (LISVAMLGAGAGVGYALLVIV). The interval 23–80 (ALLVIVTPGERRKQEMLKEMPLQDPRSREEAARTQQLLLATLQEAATTQENVAWRKNW) is mediates lipid-binding. At 29–93 (TPGERRKQEM…GEGGAGGRSP (65 aa)) the chain is on the mitochondrial intermembrane side.

The protein belongs to the UQCC3 family. Associates with the ubiquinol-cytochrome c reductase complex (mitochondrial respiratory chain complex III or cytochrome b-c1 complex). Interacts with UQCC1. Forms a complex, named COMC, composed of UQCC1, UQCC2; UQCC3 and UQCC4; mediates MT-CYB hemylation and association with the first nuclear-encoded complex III subunit UQCRQ. In terms of processing, probably cleaved by OMA1 under mitochondrial stress conditions.

The protein localises to the mitochondrion inner membrane. Required for the assembly of the ubiquinol-cytochrome c reductase complex (mitochondrial respiratory chain complex III or cytochrome b-c1 complex), mediating cytochrome b recruitment and probably stabilization within the complex. Thereby, plays an important role in ATP production by mitochondria. Cardiolipin-binding protein, it may also control the cardiolipin composition of mitochondria membranes and their morphology. The sequence is that of Ubiquinol-cytochrome-c reductase complex assembly factor 3 from Homo sapiens (Human).